The following is a 395-amino-acid chain: Acid ceramidase (395 aa).

Positions methionine 1–alanine 21 are cleaved as a signal peptide. A disulfide bridge connects residues cysteine 31 and cysteine 340. The Nucleophile role is filled by cysteine 143. Asparagine 173, asparagine 259, asparagine 286, and asparagine 348 each carry an N-linked (GlcNAc...) asparagine glycan. Residues cysteine 388 and cysteine 392 are joined by a disulfide bond.

It belongs to the acid ceramidase family. In terms of assembly, heterodimer; disulfide-linked. The heterodimer is composed of the disulfide-linked alpha and beta chains produced by autocatalytic cleavage of the precursor. N-glycosylated. In terms of processing, proteolytically cleaved into two chains alpha and beta that remain associated via a disulfide bond. Cleavage gives rise to a conformation change that activates the enzyme. The same catalytic Cys residue mediates the autoproteolytic cleavage and subsequent hydrolysis of lipid substrates. The beta chain may undergo an additional C-terminal processing.

The protein resides in the lysosome. The protein localises to the secreted. The catalysed reaction is an N-acylsphing-4-enine + H2O = sphing-4-enine + a fatty acid. It carries out the reaction N-dodecanoylsphing-4-enine + H2O = dodecanoate + sphing-4-enine. It catalyses the reaction N-tetradecanoylsphing-4-enine + H2O = tetradecanoate + sphing-4-enine. The enzyme catalyses N-hexadecanoylsphing-4-enine + H2O = sphing-4-enine + hexadecanoate. The catalysed reaction is N-octadecanoylsphing-4-enine + H2O = sphing-4-enine + octadecanoate. It carries out the reaction N-dodecanoyl-(4R)-hydroxysphinganine + H2O = (4R)-hydroxysphinganine + dodecanoate. It catalyses the reaction N-(dodecanoyl)-sphinganine + H2O = dodecanoate + sphinganine. The enzyme catalyses N-(acetyl)-sphing-4-enine + H2O = sphing-4-enine + acetate. The catalysed reaction is N-(hexanoyl)sphing-4-enine + H2O = hexanoate + sphing-4-enine. It carries out the reaction N-octanoylsphing-4-enine + H2O = octanoate + sphing-4-enine. It catalyses the reaction N-(9Z-octadecenoyl)-sphing-4-enine + H2O = sphing-4-enine + (9Z)-octadecenoate. The enzyme catalyses N-dodecanoylethanolamine + H2O = dodecanoate + ethanolamine. The protein operates within lipid metabolism; sphingolipid metabolism. In terms of biological role, lysosomal ceramidase that hydrolyzes sphingolipid ceramides into sphingosine and free fatty acids at acidic pH. Ceramides, sphingosine, and its phosphorylated form sphingosine-1-phosphate are bioactive lipids that mediate cellular signaling pathways regulating several biological processes including cell proliferation, apoptosis and differentiation. Has a higher catalytic efficiency towards C12-ceramides versus other ceramides. Also catalyzes the reverse reaction allowing the synthesis of ceramides from fatty acids and sphingosine. For the reverse synthetic reaction, the natural sphingosine D-erythro isomer is more efficiently utilized as a substrate compared to D-erythro-dihydrosphingosine and D-erythro-phytosphingosine, while the fatty acids with chain lengths of 12 or 14 carbons are the most efficiently used. Also has an N-acylethanolamine hydrolase activity. By regulating the levels of ceramides, sphingosine and sphingosine-1-phosphate in the epidermis, mediates the calcium-induced differentiation of epidermal keratinocytes. Also indirectly regulates tumor necrosis factor/TNF-induced apoptosis. By regulating the intracellular balance between ceramides and sphingosine, in adrenocortical cells, probably also acts as a regulator of steroidogenesis. The chain is Acid ceramidase from Heterocephalus glaber (Naked mole rat).